A 376-amino-acid polypeptide reads, in one-letter code: Rhodopsin (376 aa).

The Extracellular segment spans residues 1–51; the sequence is MSLINEPSYSAYSWGGQGGYGNQTVVDKVLPEMLHLIDPHWYQFPPMNPLW. N-linked (GlcNAc...) asparagine glycosylation is present at asparagine 22. Residues 52 to 76 form a helical membrane-spanning segment; it reads HGLLGFVIGCLGFVSVVGNGMVIYI. Residues 77 to 88 are Cytoplasmic-facing; sequence FSTTKGLRTPSN. The chain crosses the membrane as a helical span at residues 89–113; the sequence is LLVVNLAFSDFLMMLSMSPPMVINC. Residues 114 to 128 are Extracellular-facing; sequence YYETWVLGPFMCELY. Cysteine 125 and cysteine 202 are oxidised to a cystine. A helical transmembrane segment spans residues 129–148; the sequence is ALLGSLFGCGSIWTMVMIAL. Topologically, residues 149-167 are cytoplasmic; it reads DRYNVIVKGLAAKPMTNKT. The chain crosses the membrane as a helical span at residues 168–191; it reads AMLRILGIWAMSIAWTVFPLFGWN. Residues 192 to 215 lie on the Extracellular side of the membrane; sequence RYVPEGNMTACGTDYLNKEWVSRS. Asparagine 198 is a glycosylation site (N-linked (GlcNAc...) asparagine). Residues 216–243 form a helical membrane-spanning segment; it reads YILVYSVFVYFLPLATIIYSYWFIVQAV. At 244-278 the chain is on the cytoplasmic side; sequence SAHEKQMREQAKKMNVASLRSAENANTSAECKLAK. A helical transmembrane segment spans residues 279–302; it reads VALMTISLWFFAWTPYLVTDFSGI. Over 303–309 the chain is Extracellular; the sequence is FEWGKIS. A helical membrane pass occupies residues 310 to 334; sequence PLATIWCSLFAKANAVYNPIVYGIS. N6-(retinylidene)lysine is present on lysine 321. Topologically, residues 335-376 are cytoplasmic; it reads HPKYRAALNKKFPSLACASEPDDTASQASGATTVSDEKSASA. Positions 353 to 376 are disordered; the sequence is SEPDDTASQASGATTVSDEKSASA. Positions 358 to 368 are enriched in polar residues; that stretch reads TASQASGATTV.

Belongs to the G-protein coupled receptor 1 family. Opsin subfamily. Phosphorylated on some or all of the serine and threonine residues present in the C-terminal region.

It localises to the membrane. Its function is as follows. Visual pigments are the light-absorbing molecules that mediate vision. They consist of an apoprotein, opsin, covalently linked to cis-retinal. The protein is Rhodopsin of Sphodromantis sp. (Mantis).